The following is a 696-amino-acid chain: DNA-directed RNA polymerase subunit beta' (696 aa).

Zn(2+) contacts are provided by cysteine 69, cysteine 71, cysteine 87, and cysteine 90. Mg(2+) is bound by residues aspartate 504, aspartate 506, and aspartate 508.

It belongs to the RNA polymerase beta' chain family. RpoC1 subfamily. In plastids the minimal PEP RNA polymerase catalytic core is composed of four subunits: alpha, beta, beta', and beta''. When a (nuclear-encoded) sigma factor is associated with the core the holoenzyme is formed, which can initiate transcription. The cofactor is Mg(2+). It depends on Zn(2+) as a cofactor.

It is found in the plastid. Its subcellular location is the chloroplast. It carries out the reaction RNA(n) + a ribonucleoside 5'-triphosphate = RNA(n+1) + diphosphate. Functionally, DNA-dependent RNA polymerase catalyzes the transcription of DNA into RNA using the four ribonucleoside triphosphates as substrates. This is DNA-directed RNA polymerase subunit beta' from Pinus koraiensis (Korean pine).